We begin with the raw amino-acid sequence, 92 residues long: Small ribosomal subunit protein uS19 (92 aa).

The protein belongs to the universal ribosomal protein uS19 family.

Protein S19 forms a complex with S13 that binds strongly to the 16S ribosomal RNA. The polypeptide is Small ribosomal subunit protein uS19 (Corynebacterium jeikeium (strain K411)).